The primary structure comprises 79 residues: CDC42 small effector protein 1 (79 aa).

2 S-palmitoyl cysteine lipidation sites follow: Cys-10 and Cys-11. The CRIB domain occupies 30–43 (IGEPMNFVHLTHIG). Positions 48-79 (GAGDGLAMTGAVQEQMRSKGNRDRPWSNSRGL) are disordered. Basic and acidic residues predominate over residues 63–72 (MRSKGNRDRP).

The protein belongs to the CDC42SE/SPEC family. Interacts with CDC42 (in GTP-bound form). Interacts weakly with RAC1 and not at all with RHOA.

Its subcellular location is the cytoplasm. The protein localises to the cytoskeleton. It localises to the cell membrane. In terms of biological role, probably involved in the organization of the actin cytoskeleton by acting downstream of CDC42, inducing actin filament assembly. Alters CDC42-induced cell shape changes. In activated T-cells, may play a role in CDC42-mediated F-actin accumulation at the immunological synapse. May play a role in early contractile events in phagocytosis in macrophages. In Pongo abelii (Sumatran orangutan), this protein is CDC42 small effector protein 1 (CDC42SE1).